The chain runs to 1155 residues: DNA-directed RNA polymerase subunit beta (1155 aa).

This sequence belongs to the RNA polymerase beta chain family. The RNAP catalytic core consists of 2 alpha, 1 beta, 1 beta' and 1 omega subunit. When a sigma factor is associated with the core the holoenzyme is formed, which can initiate transcription.

It carries out the reaction RNA(n) + a ribonucleoside 5'-triphosphate = RNA(n+1) + diphosphate. Functionally, DNA-dependent RNA polymerase catalyzes the transcription of DNA into RNA using the four ribonucleoside triphosphates as substrates. In Thermobifida fusca (strain YX), this protein is DNA-directed RNA polymerase subunit beta.